Reading from the N-terminus, the 155-residue chain is Ribosomal RNA large subunit methyltransferase H (155 aa).

Residues L72, G103, and 122–127 (LSALTL) contribute to the S-adenosyl-L-methionine site.

This sequence belongs to the RNA methyltransferase RlmH family. In terms of assembly, homodimer.

Its subcellular location is the cytoplasm. It carries out the reaction pseudouridine(1915) in 23S rRNA + S-adenosyl-L-methionine = N(3)-methylpseudouridine(1915) in 23S rRNA + S-adenosyl-L-homocysteine + H(+). Functionally, specifically methylates the pseudouridine at position 1915 (m3Psi1915) in 23S rRNA. In Salmonella dublin (strain CT_02021853), this protein is Ribosomal RNA large subunit methyltransferase H.